The following is a 326-amino-acid chain: L-carnitine dehydrogenase (326 aa).

19–24 (GTGVIG) contacts NAD(+).

It belongs to the 3-hydroxyacyl-CoA dehydrogenase family. L-carnitine dehydrogenase subfamily. Homodimer.

The protein localises to the cytoplasm. The enzyme catalyses carnitine + NAD(+) = 3-dehydrocarnitine + NADH + H(+). Its pathway is amine and polyamine metabolism; carnitine metabolism. Its function is as follows. Catalyzes the NAD(+)-dependent oxidation of L-carnitine to 3-dehydrocarnitine. This Bacillus cereus (strain ZK / E33L) protein is L-carnitine dehydrogenase.